The following is a 246-amino-acid chain: Bis(5'-nucleosyl)-tetraphosphatase PrpE [asymmetrical] (246 aa).

The protein belongs to the PrpE family. Ni(2+) serves as cofactor.

The catalysed reaction is P(1),P(4)-bis(5'-guanosyl) tetraphosphate + H2O = GMP + GTP + 2 H(+). Asymmetrically hydrolyzes Ap4p to yield AMP and ATP. The polypeptide is Bis(5'-nucleosyl)-tetraphosphatase PrpE [asymmetrical] (Bacillus anthracis (strain A0248)).